A 132-amino-acid chain; its full sequence is Dehydratase CTB10 (132 aa).

Positions 21-117 (PDQSEEDHHN…IPDHFNFADM (97 aa)) constitute an EthD domain.

The protein belongs to the tpcK family.

It participates in mycotoxin biosynthesis. Its function is as follows. Dehydratase; part of the gene cluster that mediates the biosynthesis of cercosporin, a light-activated, non-host-selective toxin. The perylenequinone chromophore of cercosporin absorbs light energy to attain an electronically-activated triplet state and produces active oxygen species such as the hydroxyl radical, superoxide, hydrogen peroxide or singlet oxygen upon reaction with oxygen molecules. These reactive oxygen species cause damage to various cellular components including lipids, proteins and nucleic acids. The first step of cercosporin biosynthesis is performed by the polyketide synthase CTB1 which catalyzes the formation of nor-toralactone. The starter unit acyltransferase (SAT) domain of CTB1 initiates polyketide extension by the selective utilization of acetyl-CoA, which is elongated to the heptaketide in the beta-ketoacyl synthase (KS) domain by successive condensations with six malonyl units introduced by the malonyl acyltransferase (MAT) domain. The product template (PT) domain catalyzes C4-C9 and C2-C11 aldol cyclizations and dehydrations to a trihydroxynaphthalene, which is thought to be delivered to the thioesterase (TE) domain for product release. The bifunctional enzyme CTB3 then methylates nor-toralactone to toralactone before conducting an unusual oxidative aromatic ring opening. The O-methyltransferase CTB2 further methylates the nascent OH-6 of the CBT3 product, blocking further oxidation at this site before the reductase CTB6 reduces the 2-oxopropyl ketone at position C7, giving naphthalene. The FAD-dependent monooxygenase CTB5 in concert with the multicopper oxidase CTB12 are responsible for homodimerization of naphthalene with CTB7 installing the dioxepine moiety, finally producing cercosporin. The fasciclin domain-containing protein CTB11 might act with CTB5 and CTB12 whereas the roles of CTB9 and CTB10 have still to be elucidated. The polypeptide is Dehydratase CTB10 (Cercospora beticola (Sugarbeet leaf spot fungus)).